A 133-amino-acid chain; its full sequence is Ribosome-binding factor A (133 aa).

This sequence belongs to the RbfA family. As to quaternary structure, monomer. Binds 30S ribosomal subunits, but not 50S ribosomal subunits or 70S ribosomes.

The protein localises to the cytoplasm. Functionally, one of several proteins that assist in the late maturation steps of the functional core of the 30S ribosomal subunit. Associates with free 30S ribosomal subunits (but not with 30S subunits that are part of 70S ribosomes or polysomes). Required for efficient processing of 16S rRNA. May interact with the 5'-terminal helix region of 16S rRNA. This is Ribosome-binding factor A from Psychromonas ingrahamii (strain DSM 17664 / CCUG 51855 / 37).